The primary structure comprises 697 residues: MNYLFASTNFGCEELLEKELRALGAKNLKVVKGGIYYEGEDSILYNSLMWSRIASRIFLCIKKFTIKNSNDLYKNTYNINWTQILYLEKTFLVKFRGTNNIIRNSLFGALKIKDAIVDTFYQKYSARPNINLLTPDVRIISYLCQNLVHIMLDLSGEALNKRGYRKFFNISPIKENLSAAIILSSGWKKNTPLIDPMCGSGTLLIEAAMISSDRAPGLKRTEWGFKSWKGHKEKVWKETLKKAKERFKIGIKKCLKNYFIGYDCNPDVIKKAQKNVINANLENIISFFACNLSHLKNPYQKEEIGTLISNPPYGERCKTENNLIALYIELGIMSKKYFEKWNLSVFSSSEFLLNFLQMKSYKNFCLKNGPLYCTLKNYEIFLNKFNNTNKEYENRLEKNFKKLKKWNDLKEIECFRVYDSDLPNYKLIVDVYKKWLVIQEYQAPKSINYEKAHKRLCSAIYHSKEILSIPTNNVVIKFRKKQKRKEQYQKLFNSNSFFIIREYHVKLLVNLIDYLDTGLFSEHRLVRKLIGSMSKGKDFLNLFSYTGAASVYAGLGKSKSITTVDISNTYIQWSMRNMSINNLINSKNIFIQKDCLEWIISTKNKFDLIFINPPTFSNSKRMKKSFELKRDYIKLMINLKQILRKDGNIIFSSSTHNFEIDLNNIKKINLYAKKITNLVKTKDFLKKNYHSWLIKHI.

One can recognise a THUMP domain in the interval 43–154 (ILYNSLMWSR…QNLVHIMLDL (112 aa)).

Belongs to the methyltransferase superfamily. RlmKL family.

Its subcellular location is the cytoplasm. The catalysed reaction is guanosine(2445) in 23S rRNA + S-adenosyl-L-methionine = N(2)-methylguanosine(2445) in 23S rRNA + S-adenosyl-L-homocysteine + H(+). It catalyses the reaction guanosine(2069) in 23S rRNA + S-adenosyl-L-methionine = N(2)-methylguanosine(2069) in 23S rRNA + S-adenosyl-L-homocysteine + H(+). Specifically methylates the guanine in position 2445 (m2G2445) and the guanine in position 2069 (m7G2069) of 23S rRNA. This is Ribosomal RNA large subunit methyltransferase K/L from Buchnera aphidicola subsp. Schizaphis graminum (strain Sg).